The primary structure comprises 585 residues: Lipoprotein LpqB (585 aa).

Positions 1 to 18 are cleaved as a signal peptide; sequence MKRLLTVLVVGLVALVSG. Cysteine 19 carries N-palmitoyl cysteine lipidation. Cysteine 19 carries the S-diacylglycerol cysteine lipid modification. Residues 24–46 are disordered; that stretch reads SSSSPQAIGTVERPAPPSLPKPT. Residues 37 to 46 are compositionally biased toward pro residues; the sequence is PAPPSLPKPT.

Belongs to the LpqB lipoprotein family. Interacts with MtrB, probably extracytoplasmically via its sensor domain.

Its subcellular location is the cell membrane. It is found in the secreted. The protein resides in the cell wall. In terms of biological role, may modulate activity of the MtrAB system in controlling homeostasis of the cell wall and cell division. This chain is Lipoprotein LpqB, found in Mycolicibacterium smegmatis (strain ATCC 700084 / mc(2)155) (Mycobacterium smegmatis).